We begin with the raw amino-acid sequence, 223 residues long: Mitochondrial cardiolipin hydrolase (223 aa).

At 1–6 (MGCASS) the chain is on the mitochondrial intermembrane side. A helical membrane pass occupies residues 7 to 24 (KEEVALTPLSDVNAAKEV). The Cytoplasmic segment spans residues 25–223 (ADLKAQVDQL…QFDKLWDMFK (199 aa)). Residues 164-191 (TAAHMHHKFAIIDGRLLLNGSFNWTRQA) enclose the PLD phosphodiesterase domain. Active-site residues include His169, Lys171, and Asp176.

It belongs to the phospholipase D family. MitoPLD/Zucchini subfamily. Homodimer.

The protein localises to the mitochondrion outer membrane. Plays a critical role in PIWI-interacting RNA (piRNA) biogenesis. piRNAs provide essential protection against the activity of mobile genetic elements. piRNA-mediated transposon silencing is thus critical for maintaining genome stability. Backbone-non-specific, single strand-specific nuclease, cleaving either RNA or DNA substrates with similar affinity. Produces 5' phosphate and 3' hydroxyl termini, suggesting it could directly participate in the processing of primary piRNA transcripts. Has been proposed to act as a cardiolipin hydrolase to generate phosphatidic acid at mitochondrial surface. Although it cannot be excluded that it can act as a phospholipase in some circumstances, this activity could not be confirmed. The chain is Mitochondrial cardiolipin hydrolase from Chlamydomonas reinhardtii (Chlamydomonas smithii).